Reading from the N-terminus, the 256-residue chain is uncharacterized protein (256 aa).

This is an uncharacterized protein from Acanthamoeba polyphaga mimivirus (APMV).